The chain runs to 298 residues: Porphobilinogen deaminase (298 aa).

Cysteine 242 carries the S-(dipyrrolylmethanemethyl)cysteine modification.

The protein belongs to the HMBS family. In terms of assembly, monomer. It depends on dipyrromethane as a cofactor.

The catalysed reaction is 4 porphobilinogen + H2O = hydroxymethylbilane + 4 NH4(+). It participates in porphyrin-containing compound metabolism; protoporphyrin-IX biosynthesis; coproporphyrinogen-III from 5-aminolevulinate: step 2/4. In terms of biological role, tetrapolymerization of the monopyrrole PBG into the hydroxymethylbilane pre-uroporphyrinogen in several discrete steps. In Fusobacterium nucleatum subsp. nucleatum (strain ATCC 25586 / DSM 15643 / BCRC 10681 / CIP 101130 / JCM 8532 / KCTC 2640 / LMG 13131 / VPI 4355), this protein is Porphobilinogen deaminase.